The sequence spans 512 residues: MSQTEEKKGIGRRVQAFGSFLSSMIMPNIGAFIAWGFIAAIFIDNGWLPNKDLATLAGPMITYLIPLLIAFSGGRLIYDLRGGIIAATATMGVIVALPDTPMLLGAMIMGPLVGWLMKKTDQLIQPRTPQGFEMLFNNFSAGILGFIMTIAGFKILAPLMKFIMHILSVAVEALVHAHLLPLVSILVEPAKIVFLNNAINHGVFTPLGADQAAKAGQSILYTIESNPGPGLGILLAYMIFGKGTAKTTSYGAGIIHFLGGIHEIYFPYVLMRPLLFIAVILGGMTGVATYQATGFGFKSPASPGSFIVYCLNAPRGEFLHMLLGVFLAALVSFVVAALIMKFTREPKQDLEAATAQMENTKGKKSSVASKLVSSDKNVNTEENASGNVSETSSSDDDPEALLDNYNTEDVDAHNYNNINHVIFACDAGMGSSAMGASMLRNKFKKAGINDITVTNTAINQLPKDAQLVITQKKLTDRAIKQTPNAIHISVDNFLNSPRYEELLNNLKKDDQA.

Over 1 to 28 (MSQTEEKKGIGRRVQAFGSFLSSMIMPN) the chain is Cytoplasmic. A PTS EIIC type-2 domain is found at 17 to 349 (FGSFLSSMIM…MKFTREPKQD (333 aa)). A helical transmembrane segment spans residues 29 to 50 (IGAFIAWGFIAAIFIDNGWLPN). Topologically, residues 51–54 (KDLA) are extracellular. A helical transmembrane segment spans residues 55–75 (TLAGPMITYLIPLLIAFSGGR). The Cytoplasmic portion of the chain corresponds to 76–139 (LIYDLRGGII…QGFEMLFNNF (64 aa)). The chain crosses the membrane as a helical span at residues 140-161 (SAGILGFIMTIAGFKILAPLMK). The Extracellular portion of the chain corresponds to 162 to 170 (FIMHILSVA). A helical transmembrane segment spans residues 171-191 (VEALVHAHLLPLVSILVEPAK). At 192–278 (IVFLNNAINH…VLMRPLLFIA (87 aa)) the chain is on the cytoplasmic side. A helical transmembrane segment spans residues 279 to 298 (VILGGMTGVATYQATGFGFK). Topologically, residues 299 to 318 (SPASPGSFIVYCLNAPRGEF) are extracellular. A helical membrane pass occupies residues 319–340 (LHMLLGVFLAALVSFVVAALIM). Residues 341 to 512 (KFTREPKQDL…LNNLKKDDQA (172 aa)) lie on the Cytoplasmic side of the membrane. Residues 355-402 (AQMENTKGKKSSVASKLVSSDKNVNTEENASGNVSETSSSDDDPEALL) are disordered. Positions 365-376 (SSVASKLVSSDK) are enriched in low complexity. Over residues 380–392 (TEENASGNVSETS) the composition is skewed to polar residues. Residues 419–512 (NHVIFACDAG…LNNLKKDDQA (94 aa)) form the PTS EIIB type-2 domain. Catalysis depends on C425, which acts as the Phosphocysteine intermediate; for EIIB activity. C425 carries the post-translational modification Phosphocysteine; by EIIA.

Homodimer.

Its subcellular location is the cell membrane. It carries out the reaction D-mannitol(out) + N(pros)-phospho-L-histidyl-[protein] = D-mannitol 1-phosphate(in) + L-histidyl-[protein]. The phosphoenolpyruvate-dependent sugar phosphotransferase system (sugar PTS), a major carbohydrate active transport system, catalyzes the phosphorylation of incoming sugar substrates concomitantly with their translocation across the cell membrane. The enzyme II CmtAB PTS system is involved in D-mannitol transport. This Staphylococcus aureus (strain COL) protein is PTS system mannitol-specific EIICB component (mtlA).